We begin with the raw amino-acid sequence, 229 residues long: Large ribosomal subunit protein uL1 (229 aa).

It belongs to the universal ribosomal protein uL1 family. Part of the 50S ribosomal subunit.

In terms of biological role, binds directly to 23S rRNA. The L1 stalk is quite mobile in the ribosome, and is involved in E site tRNA release. Functionally, protein L1 is also a translational repressor protein, it controls the translation of the L11 operon by binding to its mRNA. The chain is Large ribosomal subunit protein uL1 from Clostridium botulinum (strain ATCC 19397 / Type A).